The chain runs to 405 residues: MTVLSEQDKIRLLADIVKIQTENDHEIEVCEYLKDLLSQYDIDSKIVKVNDSRANLVAEIGSGAPVLAISGHMDVVDAGDHDDWTFPPFELTDKDGKLFGRGTTDMKGGLMAMVIAMIELKQSNALKQGTIRLLATTGEETEQYGAQLLADEGYLDDVSGLIIGEPTSNIAYYAHKGSMSCVVTAKGKAAHSSMPHLGTNAVDILVDFVNEMKQEYKNIKEHDKVHELDAVPMIEKHLHRKIGEEESHIYSGFVMLNSVFNGGKQVNSVPHKATAKYNVRTVPEYDSTFVKDLFEKVIRHVGEDYLTVDIPSSHDPVASDRDNPLIQNITRIAPNYVHEDIVVSALIGTTDASSFLGTNENNVDFAVFGPGESIMAHRVDEFIRKDMYLSYIDVYKDVFKAYLEK.

Histidine 72 is a binding site for Zn(2+). The active site involves aspartate 74. Zn(2+) is bound at residue aspartate 105. Glutamate 139 acts as the Proton acceptor in catalysis. Residues glutamate 140, glutamate 165, and histidine 377 each contribute to the Zn(2+) site.

It belongs to the peptidase M20A family. It depends on Zn(2+) as a cofactor. Co(2+) is required as a cofactor.

It carries out the reaction N-succinyl-(2S,6S)-2,6-diaminopimelate + H2O = (2S,6S)-2,6-diaminopimelate + succinate. Its pathway is amino-acid biosynthesis; L-lysine biosynthesis via DAP pathway; LL-2,6-diaminopimelate from (S)-tetrahydrodipicolinate (succinylase route): step 3/3. The sequence is that of Probable succinyl-diaminopimelate desuccinylase (dapE) from Staphylococcus epidermidis (strain ATCC 35984 / DSM 28319 / BCRC 17069 / CCUG 31568 / BM 3577 / RP62A).